The following is a 712-amino-acid chain: U11/U12 small nuclear ribonucleoprotein 48 kDa protein (712 aa).

The CHHC U11-48K-type zinc-finger motif lies at 98-125 (FVRCPFDSNHFMPPEALFLHSLRCPNTL). Zn(2+)-binding residues include C101, H107, H117, and C121. The segment at 562 to 712 (QSRSPIGNDQ…EDRYIPTEKE (151 aa)) is disordered. Composition is skewed to basic and acidic residues over residues 585-595 (KQWKGENRADI), 603-614 (QNSDKVKRHDEY), 629-663 (KHSDRRDDKLRDRRKDKHNDRRDDEFTRTKRHSIE), 672-693 (SSREKSSSDYKTKRDDPYDRRS), and 702-712 (FEDRYIPTEKE).

Component of the U11/U12 snRNPs that are part of the U12-type spliceosome. Not found in the major spliceosome.

The protein localises to the nucleus. Likely involved in U12-type 5' splice site recognition. This Arabidopsis thaliana (Mouse-ear cress) protein is U11/U12 small nuclear ribonucleoprotein 48 kDa protein (SNRNP48).